The following is a 786-amino-acid chain: LPS-assembly protein LptD (786 aa).

Residues 1 to 39 (MPPKPLFPNVFPGDGAPRKRRLALALLAVPGLVPAVSYA) form the signal peptide.

This sequence belongs to the LptD family. In terms of assembly, component of the lipopolysaccharide transport and assembly complex. Interacts with LptE and LptA.

The protein localises to the cell outer membrane. Functionally, together with LptE, is involved in the assembly of lipopolysaccharide (LPS) at the surface of the outer membrane. The sequence is that of LPS-assembly protein LptD from Burkholderia ambifaria (strain ATCC BAA-244 / DSM 16087 / CCUG 44356 / LMG 19182 / AMMD) (Burkholderia cepacia (strain AMMD)).